Consider the following 257-residue polypeptide: Neurotrophin-3 (257 aa).

A signal peptide spans 1–18 (MSILFYVIFLAYLRGIQS). The propeptide occupies 19-138 (TNMDQRSLPE…VLNRTSRRKR (120 aa)). Asparagine 131 carries N-linked (GlcNAc...) asparagine glycosylation. Cystine bridges form between cysteine 152–cysteine 217, cysteine 195–cysteine 246, and cysteine 205–cysteine 248.

This sequence belongs to the NGF-beta family. In the embryo, the expression peak at E4.5 and decreases at later stages of development.

It localises to the secreted. Functionally, seems to promote the survival of visceral and proprioceptive sensory neurons. This Gallus gallus (Chicken) protein is Neurotrophin-3 (NTF3).